Consider the following 81-residue polypeptide: Thrombin-like enzyme collinein-3 (81 aa).

Asp-4 is a catalytic residue. Cys-51 and Cys-68 form a disulfide bridge.

Monomer. Expressed by the vanom gland.

It localises to the secreted. Thrombin-like snake venom serine protease. This is Thrombin-like enzyme collinein-3 from Crotalus durissus collilineatus (Brazilian rattlesnake).